A 212-amino-acid chain; its full sequence is MADLIVRSLGQQPYMETWEAMKSFTANRDETTVDELWCLEHPRVFTQGQAGKAEHILLPGDIPVIQVDRGGQVTYHGPGQLVIYLLIDLTRHKLGVRNLVSAIEQAIVRTLAQGGIEAAPRSDAPGVYVNGAKIASLGLRVRRGCSFHGLALNVNMDMEPFSRINPCGYAGMSMCQVSDFEAGASVYDLERRLVSELVEGLGHSQVEQRQGW.

The region spanning 30–205 (ETTVDELWCL…ELVEGLGHSQ (176 aa)) is the BPL/LPL catalytic domain. Substrate-binding positions include 69-76 (RGGQVTYH), 136-138 (SLG), and 149-151 (GLA). The active-site Acyl-thioester intermediate is the Cys167.

It belongs to the LipB family.

The protein resides in the cytoplasm. The catalysed reaction is octanoyl-[ACP] + L-lysyl-[protein] = N(6)-octanoyl-L-lysyl-[protein] + holo-[ACP] + H(+). The protein operates within protein modification; protein lipoylation via endogenous pathway; protein N(6)-(lipoyl)lysine from octanoyl-[acyl-carrier-protein]: step 1/2. Functionally, catalyzes the transfer of endogenously produced octanoic acid from octanoyl-acyl-carrier-protein onto the lipoyl domains of lipoate-dependent enzymes. Lipoyl-ACP can also act as a substrate although octanoyl-ACP is likely to be the physiological substrate. In Marinobacter nauticus (strain ATCC 700491 / DSM 11845 / VT8) (Marinobacter aquaeolei), this protein is Octanoyltransferase.